The primary structure comprises 165 residues: E3 ubiquitin-protein ligase RNF181 (165 aa).

The RING-type; atypical zinc finger occupies 88-129; that stretch reads CPVCLLEFEEEETVIEMPCHHLFHSNCILPWLSKTNSCPLCR. Residues 136-165 are disordered; that stretch reads DDSYEEHKKDKARRQQQQHRLENLHGAMYT. Thr-165 is modified (phosphothreonine).

It belongs to the RNF181 family. In terms of assembly, directly interacts with ITGA2B and, as a result, with integrin ITGA2B/ITGB3. There is no evidence that integrin ITGA2B/ITGB3 is an endogenous substrate for RNF181-directed ubiquitination. Post-translationally, auto-ubiquitinated as part of the enzymatic reaction.

It catalyses the reaction S-ubiquitinyl-[E2 ubiquitin-conjugating enzyme]-L-cysteine + [acceptor protein]-L-lysine = [E2 ubiquitin-conjugating enzyme]-L-cysteine + N(6)-ubiquitinyl-[acceptor protein]-L-lysine.. It functions in the pathway protein modification; protein ubiquitination. Functionally, E3 ubiquitin-protein ligase which accepts ubiquitin from an E2 ubiquitin-conjugating enzyme in the form of a thioester and then directly transfers the ubiquitin to targeted substrates. Catalyzes monoubiquitination of 26S proteasome subunit PSMC2/RPT1. The chain is E3 ubiquitin-protein ligase RNF181 (Rnf181) from Rattus norvegicus (Rat).